A 316-amino-acid polypeptide reads, in one-letter code: UPF0324 membrane protein SO_4708 (316 aa).

Transmembrane regions (helical) follow at residues 61–80 (LLSY…AAIE), 85–107 (NLGL…TRAL), 114–136 (GHLI…APAV), 146–168 (ALAC…GHLL), 175–197 (FGVW…SAYG), 207–226 (IKLA…ALIF), 233–252 (LNLP…AHWL), 262–281 (LFMV…GAGI), and 293–315 (PLLL…ILYF).

The protein belongs to the UPF0324 family.

The protein localises to the cell membrane. This Shewanella oneidensis (strain ATCC 700550 / JCM 31522 / CIP 106686 / LMG 19005 / NCIMB 14063 / MR-1) protein is UPF0324 membrane protein SO_4708.